The chain runs to 278 residues: Large ribosomal subunit protein uL2 (278 aa).

Positions 222 to 278 (GVVMNPIDHPHGGGEGRTSGGRHPVTPWGKPTKGKKTRSNKSTDKFILISRHKRKKK) are disordered.

It belongs to the universal ribosomal protein uL2 family. As to quaternary structure, part of the 50S ribosomal subunit. Forms a bridge to the 30S subunit in the 70S ribosome.

Functionally, one of the primary rRNA binding proteins. Required for association of the 30S and 50S subunits to form the 70S ribosome, for tRNA binding and peptide bond formation. It has been suggested to have peptidyltransferase activity; this is somewhat controversial. Makes several contacts with the 16S rRNA in the 70S ribosome. This is Large ribosomal subunit protein uL2 from Rhodopseudomonas palustris (strain BisB5).